We begin with the raw amino-acid sequence, 213 residues long: Peroxynitrite isomerase 2 (213 aa).

The GXWXGXG motif lies at 58–64 (GVWRGEG). Heme b is bound by residues K176 and H203.

Belongs to the nitrobindin family. In terms of assembly, homodimer. It depends on heme b as a cofactor.

It catalyses the reaction peroxynitrite = nitrate. Its pathway is nitrogen metabolism. Functionally, heme-binding protein able to scavenge peroxynitrite and to protect free L-tyrosine against peroxynitrite-mediated nitration, by acting as a peroxynitrite isomerase that converts peroxynitrite to nitrate. Therefore, this protein likely plays a role in peroxynitrite sensing and in the detoxification of reactive nitrogen and oxygen species (RNS and ROS, respectively). Is able to bind nitric oxide (NO) in vitro, but may act as a sensor of peroxynitrite levels in vivo. The chain is Peroxynitrite isomerase 2 from Rhodococcus jostii (strain RHA1).